Reading from the N-terminus, the 894-residue chain is Mitogen-activated protein kinase kinase kinase kinase 3 (894 aa).

N-acetylmethionine is present on methionine 1. Residues phenylalanine 16–valine 273 form the Protein kinase domain. ATP is bound by residues isoleucine 22–valine 30 and lysine 45. Catalysis depends on aspartate 136, which acts as the Proton acceptor. A Phosphoserine modification is found at serine 329. Positions aspartate 339–phenylalanine 358 are disordered. Basic and acidic residues predominate over residues proline 340–proline 353. Serine 398 bears the Phosphoserine mark. The tract at residues histidine 408–proline 537 is disordered. A compositionally biased stretch (pro residues) spans histidine 473–lysine 487. Residues leucine 508 to leucine 520 show a composition bias toward polar residues. A CNH domain is found at proline 556–valine 867.

This sequence belongs to the protein kinase superfamily. STE Ser/Thr protein kinase family. STE20 subfamily. As to quaternary structure, interacts with SH3GL2. Interaction appears to regulate MAP4K3-mediated JNK activation. Mg(2+) is required as a cofactor.

It carries out the reaction L-seryl-[protein] + ATP = O-phospho-L-seryl-[protein] + ADP + H(+). The enzyme catalyses L-threonyl-[protein] + ATP = O-phospho-L-threonyl-[protein] + ADP + H(+). Functionally, serine/threonine kinase that plays a role in the response to environmental stress. Appears to act upstream of the JUN N-terminal pathway. Activator of the Hippo signaling pathway which plays a pivotal role in organ size control and tumor suppression by restricting proliferation and promoting apoptosis. MAP4Ks act in parallel to and are partially redundant with STK3/MST2 and STK4/MST2 in the phosphorylation and activation of LATS1/2, and establish MAP4Ks as components of the expanded Hippo pathway. The protein is Mitogen-activated protein kinase kinase kinase kinase 3 (Map4k3) of Mus musculus (Mouse).